Here is a 384-residue protein sequence, read N- to C-terminus: Glucans biosynthesis protein C (384 aa).

Transmembrane regions (helical) follow at residues 17–37, 54–74, 91–111, 140–160, 173–193, 212–232, 240–260, 274–294, 311–331, and 338–358; these read AWLM…THSW, FIHA…SYML, VGIP…ILLQ, LWFL…FTWF, AISL…YAAI, FIVM…LAFI, FTTP…AYLL, TESV…FSLG, ASLF…AYIT, and LIGF…LYEI.

Belongs to the acyltransferase 3 family. OpgC subfamily.

The protein localises to the cell membrane. Its pathway is glycan metabolism; osmoregulated periplasmic glucan (OPG) biosynthesis. In terms of biological role, necessary for the succinyl substitution of periplasmic glucans. Could catalyze the transfer of succinyl residues from the cytoplasmic side of the membrane to the nascent glucan backbones on the periplasmic side of the membrane. The polypeptide is Glucans biosynthesis protein C (Salmonella schwarzengrund (strain CVM19633)).